The sequence spans 202 residues: Na(+)-translocating NADH-quinone reductase subunit E (202 aa).

The next 6 helical transmembrane spans lie at 5–25, 35–55, 81–101, 114–134, 144–164, and 180–200; these read VSLF…FLGM, VSTA…TVPL, FLGL…LEMF, GVFL…LFMV, VVYG…LAGI, and LGIT…FGGM.

It belongs to the NqrDE/RnfAE family. As to quaternary structure, composed of six subunits; NqrA, NqrB, NqrC, NqrD, NqrE and NqrF.

The protein resides in the cell inner membrane. It carries out the reaction a ubiquinone + n Na(+)(in) + NADH + H(+) = a ubiquinol + n Na(+)(out) + NAD(+). NQR complex catalyzes the reduction of ubiquinone-1 to ubiquinol by two successive reactions, coupled with the transport of Na(+) ions from the cytoplasm to the periplasm. NqrA to NqrE are probably involved in the second step, the conversion of ubisemiquinone to ubiquinol. The protein is Na(+)-translocating NADH-quinone reductase subunit E of Psychrobacter arcticus (strain DSM 17307 / VKM B-2377 / 273-4).